The sequence spans 232 residues: Phosphatidylserine decarboxylase proenzyme (232 aa).

S190 acts as the Schiff-base intermediate with substrate; via pyruvic acid in catalysis. S190 carries the pyruvic acid (Ser); by autocatalysis modification.

Belongs to the phosphatidylserine decarboxylase family. PSD-A subfamily. As to quaternary structure, heterodimer of a large membrane-associated beta subunit and a small pyruvoyl-containing alpha subunit. It depends on pyruvate as a cofactor. Is synthesized initially as an inactive proenzyme. Formation of the active enzyme involves a self-maturation process in which the active site pyruvoyl group is generated from an internal serine residue via an autocatalytic post-translational modification. Two non-identical subunits are generated from the proenzyme in this reaction, and the pyruvate is formed at the N-terminus of the alpha chain, which is derived from the carboxyl end of the proenzyme. The post-translation cleavage follows an unusual pathway, termed non-hydrolytic serinolysis, in which the side chain hydroxyl group of the serine supplies its oxygen atom to form the C-terminus of the beta chain, while the remainder of the serine residue undergoes an oxidative deamination to produce ammonia and the pyruvoyl prosthetic group on the alpha chain.

It localises to the cell membrane. It carries out the reaction a 1,2-diacyl-sn-glycero-3-phospho-L-serine + H(+) = a 1,2-diacyl-sn-glycero-3-phosphoethanolamine + CO2. The protein operates within phospholipid metabolism; phosphatidylethanolamine biosynthesis; phosphatidylethanolamine from CDP-diacylglycerol: step 2/2. Catalyzes the formation of phosphatidylethanolamine (PtdEtn) from phosphatidylserine (PtdSer). This is Phosphatidylserine decarboxylase proenzyme from Brucella abortus (strain S19).